Reading from the N-terminus, the 555-residue chain is Dimethylaniline monooxygenase [N-oxide-forming] 4 (555 aa).

FAD is bound by residues 9-13 (GAGVS), E32, and 40-41 (LW). Residues 60–61 (TN) and 195–198 (SGGD) contribute to the NADP(+) site. The chain crosses the membrane as a helical span at residues 515–532 (YLKVWGAPLLLASVLLIC).

This sequence belongs to the FMO family. It depends on FAD as a cofactor. Kidney and liver.

Its subcellular location is the microsome membrane. The protein localises to the endoplasmic reticulum membrane. It catalyses the reaction N,N-dimethylaniline + NADPH + O2 + H(+) = N,N-dimethylaniline N-oxide + NADP(+) + H2O. In terms of biological role, this protein is involved in the oxidative metabolism of a variety of xenobiotics such as drugs and pesticides. This Oryctolagus cuniculus (Rabbit) protein is Dimethylaniline monooxygenase [N-oxide-forming] 4 (FMO4).